A 476-amino-acid chain; its full sequence is Nodulation protein NoeA (476 aa).

Functionally, not known; does not seem to participate in nod factor synthesis but required for nodulation on some specific Medicago species such as M.littoralis. The chain is Nodulation protein NoeA (noeA) from Rhizobium meliloti (strain 1021) (Ensifer meliloti).